Consider the following 757-residue polypeptide: MDVNPTLLFLKVPAQNAISTTFPYTGDPPYSHGTGTGYTMDTVNRTHQYSEKGKWTTNTETGAPQLNPIDGPLPEDNEPSGYAQTDCVLEAMAFLEESHPGIFENSCLETMEVVQQTRVDKLTQGRQTYDWTLNRNQPAATALANTIEVFRSNGLTANESGRLIDFLKDVMESMDKEEMEITTHFQRKRRVRDNMTKKMVTQRTIGKKKQKLNKRSYLIRALTLNTMTKDAERGKLKRRAIATPGMQIRGFVYFVETLARSICEKLEQSGLPVGGNEKKAKLANVVRKMMTNSQDTELSFTITGDNTKWNENQNPRMFLAMITYITRNQPEWFRNVLSIAPIMFSNKMARLGKGYMFESKGMKLRTQIPAEMLASIDLKYFNDSTRKKIEKIRPLLIDGTASLSPGMMMGMFNMLSTVLGVSILNLGQKRYTKTTYWWDGLQSSDDFALIVNAPNHEGIQAGVDRFYRTCKLVGINMSKKKSYINRTGTFEFTSFFYRYGFVANFSMELPSFGVSGINESADMSIGVTVIKNNMINNDLGPATAQMALQLFIKDYRYTYRCHRGDTQIQTRRSFELKKLWEQTRSKAGLLVSDGGPNLYNIRNLHIPEVCLKWELMDEDYQGRLCNPLNPFVSHKEIESVNNAVVMPAHGPAKSMEYDAVATTHSWIPKRNRSILNTSQRGILEDEQMYQKCCNLFEKFFPSSSYRRPVGISSMVEAMVSRARIDARIDFESGRIKKEEFAEIMKICSTIEELRRQK.

Positions 50-82 (SEKGKWTTNTETGAPQLNPIDGPLPEDNEPSGY) are disordered. Over residues 55-64 (WTTNTETGAP) the composition is skewed to polar residues. 2 short sequence motifs (nuclear localization signal) span residues 187-195 (RKRRVRDNM) and 203-216 (RTIG…NKRS). Residues 249 to 256 (RGFVYFVE) are promoter-binding site. In terms of domain architecture, RdRp catalytic spans 286-483 (VRKMMTNSQD…GINMSKKKSY (198 aa)).

This sequence belongs to the influenza viruses polymerase PB1 family. As to quaternary structure, influenza RNA polymerase is composed of three subunits: PB1, PB2 and PA. Interacts (via N-terminus) with PA (via C-terminus). Interacts (via C-terminus) with PB2 (via N-terminus); this interaction is essential for transcription initiation. Phosphorylated by host PRKCA.

It localises to the host nucleus. It is found in the host cytoplasm. The enzyme catalyses RNA(n) + a ribonucleoside 5'-triphosphate = RNA(n+1) + diphosphate. In terms of biological role, RNA-dependent RNA polymerase which is responsible for replication and transcription of virus RNA segments. The transcription of viral mRNAs occurs by a unique mechanism called cap-snatching. 5' methylated caps of cellular mRNAs are cleaved after 10-13 nucleotides by PA. In turn, these short capped RNAs are used as primers by PB1 for transcription of viral mRNAs. During virus replication, PB1 initiates RNA synthesis and copy vRNA into complementary RNA (cRNA) which in turn serves as a template for the production of more vRNAs. This is RNA-directed RNA polymerase catalytic subunit from Influenza A virus (strain A/Turkey/Ontario/7732/1966 H5N9).